The sequence spans 301 residues: Small ribosomal subunit protein uS2 (301 aa).

The protein belongs to the universal ribosomal protein uS2 family. In terms of assembly, component of the small ribosomal subunit. Mature ribosomes consist of a small (40S) and a large (60S) subunit. The 40S subunit contains about 33 different proteins and 1 molecule of RNA (18S). The 60S subunit contains about 49 different proteins and 3 molecules of RNA (28S, 5.8S and 5S). Interacts with ribosomal protein S21.

The protein resides in the cytoplasm. Required for the assembly and/or stability of the 40S ribosomal subunit. Required for the processing of the 20S rRNA-precursor to mature 18S rRNA in a late step of the maturation of 40S ribosomal subunits. The chain is Small ribosomal subunit protein uS2 from Brugia malayi (Filarial nematode worm).